Consider the following 1002-residue polypeptide: Solute carrier family 12 member 3 (1002 aa).

Residues 1 to 135 (MAELPVTELP…KSPGEPVRFG (135 aa)) are Cytoplasmic-facing. At Ser41 the chain carries Phosphoserine. At Thr44 the chain carries Phosphothreonine. Ser47 is subject to Phosphoserine. Phosphothreonine occurs at positions 48, 53, and 58. Phosphoserine is present on residues Ser71 and Ser89. Thr122 bears the Phosphothreonine mark. Phosphoserine is present on Ser124. The chain crosses the membrane as a discontinuously helical span at residues 136–165 (WVKGVMIRCMLNIWGVILYLRLPWITAQAG). Na(+) contacts are provided by Leu146 and Trp149. A helical membrane pass occupies residues 166–187 (IVLTWLIILLSVMVTSITGLSI). Residues 188–218 (SAISTNGKVKSGGTYFLISRSLGPELGGSIG) lie on the Cytoplasmic side of the membrane. A helical transmembrane segment spans residues 219-241 (LIFAFANAVGVAMHTVGFAETVR). Residues 242 to 253 (DLLQEYGTPIVD) lie on the Extracellular side of the membrane. Transmembrane regions (helical) follow at residues 254–278 (PIND…AGME) and 279–301 (WESK…YLVG). At 302–336 (TLIPASEDKASKGFYSYHGDIFVQNLVPDWRGIDG) the chain is on the extracellular side. A discontinuously helical transmembrane segment spans residues 337 to 358 (SFFGMFSIFFPSATGILAGANI). Positions 351, 352, and 353 each coordinate chloride. The Cytoplasmic segment spans residues 359-369 (SGDLKDPAVAI). The chain crosses the membrane as a helical span at residues 370–391 (PKGTLMAIFWTTISYLAISATI). The Extracellular portion of the chain corresponds to 392 to 451 (GSCVVRDASGDVNDTMTPGPGPCEGLACGYGWNFTECSQQRSCRYGLINYYQTMSMVSAF). Residue Asn404 is glycosylated (N-linked (GlcNAc...) asparagine). Residues Cys414 and Cys419 are joined by a disulfide bond. N-linked (GlcNAc...) asparagine glycosylation is present at Asn424. Cys428 and Cys434 form a disulfide bridge. The chain crosses the membrane as a helical span at residues 452–475 (APLITAGIFGATLSSALACLVSAA). Na(+) contacts are provided by Ala462, Ser465, and Ser466. At 476 to 505 (KVFQCLCEDQLYPLIGFFGKGYGKNREPVR) the chain is on the cytoplasmic side. The helical transmembrane segment at 506-520 (GYLLAYAIAVAFIII) threads the bilayer. Residues 521 to 525 (AELNT) are Extracellular-facing. The chain crosses the membrane as a helical span at residues 526–542 (IAPIISNFFLCSYALIN). Tyr538 is a binding site for chloride. The Cytoplasmic portion of the chain corresponds to 543 to 565 (FSCFHASITNSPGWRPSFRYYSK). The next 2 helical transmembrane spans lie at 566–585 (WAAL…LTWW) and 586–597 (AALIAIGVVLFL). At 598-1002 (LLYVIYKKPE…QENVLTFYCQ (405 aa)) the chain is on the cytoplasmic side. The interval 613-628 (SVQAGSYNLALSYSVG) is scissor helix. Residues Leu646, Arg653, Val675, Gly739, Leu778, and Asn779 each contribute to the ATP site.

The protein belongs to the SLC12A transporter family. Homodimer; adopts a domain-swap conformation at the scissor helices connecting the transmembrane domain and C-terminal domain. Interacts with KLHL3. Interacts with IL18R1; this interaction is increased by IL18 treatment. Post-translationally, ubiquitinated; ubiquitination is essential for regulation of endocytosis. Phosphorylated at Thr-53, Thr-58 and Ser-71 by OXSR1/OSR1 and STK39/SPAK downstream of WNK4, promoting its activity. Phosphorylated in response to IL18. As to expression, expressed predominantly in kidney, including in distal tubules (at protein level). Detected at low levels in heart, lung and liver. Not detected in normal aorta, but abundantly expressed in fatty streaks and advanced atherosclerotic lesions. In atherosclerotic lesions, expressed in macrophages, smooth muscle cells and endothelial cells (at protein level).

The protein resides in the cell membrane. It is found in the apical cell membrane. It carries out the reaction chloride(out) + Na(+)(out) = chloride(in) + Na(+)(in). Phosphorylation by OXSR1/OSR1 and STK39/SPAK in kidney distal convoluted tubules promotes its activity. Also activated by OXSR1/OSR1 and STK39/SPAK downstream of WNK3. Inhibited by thiazide-type diuretic metolazone. Thiazide drugs, such as polythiazide, specifically inhibit SLC12A3/NCC transporter activity by competing with chloride for binding. In terms of biological role, electroneutral sodium and chloride ion cotransporter, which acts as a key mediator of sodium and chloride reabsorption in kidney distal convoluted tubules. Also acts as a receptor for the pro-inflammatory cytokine IL18, thereby contributing to IL18-induced cytokine production, including IFNG, IL6, IL18 and CCL2. May act either independently of IL18R1, or in a complex with IL18R1. The protein is Solute carrier family 12 member 3 of Mus musculus (Mouse).